The primary structure comprises 554 residues: CTP synthase (554 aa).

Residues 1-265 are amidoligase domain; the sequence is MTPLIFVTGG…DEIVVNQLKL (265 aa). Residue serine 13 participates in CTP binding. Serine 13 provides a ligand contact to UTP. Residues 14 to 19 and aspartate 71 contribute to the ATP site; that span reads SLGKGI. Mg(2+)-binding residues include aspartate 71 and glutamate 139. CTP is bound by residues 146-148, 186-191, and lysine 222; these read DIE and KTKPTQ. UTP-binding positions include 186–191 and lysine 222; that span reads KTKPTQ. The region spanning 292–545 is the Glutamine amidotransferase type-1 domain; that stretch reads TIAVVGKYVD…IRAARERKAG (254 aa). Residue glycine 353 coordinates L-glutamine. Cysteine 380 (nucleophile; for glutamine hydrolysis) is an active-site residue. L-glutamine-binding positions include 381 to 384, glutamate 404, and arginine 471; that span reads YGMQ. Active-site residues include histidine 518 and glutamate 520.

The protein belongs to the CTP synthase family. As to quaternary structure, homotetramer.

It carries out the reaction UTP + L-glutamine + ATP + H2O = CTP + L-glutamate + ADP + phosphate + 2 H(+). It catalyses the reaction L-glutamine + H2O = L-glutamate + NH4(+). The enzyme catalyses UTP + NH4(+) + ATP = CTP + ADP + phosphate + 2 H(+). It functions in the pathway pyrimidine metabolism; CTP biosynthesis via de novo pathway; CTP from UDP: step 2/2. With respect to regulation, allosterically activated by GTP, when glutamine is the substrate; GTP has no effect on the reaction when ammonia is the substrate. The allosteric effector GTP functions by stabilizing the protein conformation that binds the tetrahedral intermediate(s) formed during glutamine hydrolysis. Inhibited by the product CTP, via allosteric rather than competitive inhibition. Its function is as follows. Catalyzes the ATP-dependent amination of UTP to CTP with either L-glutamine or ammonia as the source of nitrogen. Regulates intracellular CTP levels through interactions with the four ribonucleotide triphosphates. The chain is CTP synthase from Stenotrophomonas maltophilia (strain R551-3).